The sequence spans 631 residues: ESX-3 secretion system protein EccA3 (631 aa).

385 to 392 (GPPGTGKT) is an ATP binding site.

This sequence belongs to the CbxX/CfxQ family. As to quaternary structure, part of the ESX-3 / type VII secretion system (T7SS), which is composed of cytosolic and membrane components.

The protein localises to the cytoplasm. Functionally, part of the ESX-3 specialized secretion system, which is important for iron and zinc uptake or homeostasis. EccA3 exhibits ATPase activity and may provide energy for the export of ESX-3 substrates. This chain is ESX-3 secretion system protein EccA3, found in Mycobacterium tuberculosis (strain CDC 1551 / Oshkosh).